A 470-amino-acid chain; its full sequence is Ribosomal protein uS12 methylthiotransferase RimO (470 aa).

The segment at 1 to 27 (MPCQAPHSDSNVKNPSEATNQKDHSPR) is disordered. A compositionally biased stretch (polar residues) spans 7–19 (HSDSNVKNPSEAT). One can recognise an MTTase N-terminal domain in the interval 26–141 (PRVGFVSLGC…VMQAVHTHLP (116 aa)). Cysteine 35, cysteine 71, cysteine 100, cysteine 172, cysteine 176, and cysteine 179 together coordinate [4Fe-4S] cluster. Residues 158 to 399 (LTPKHYAYLK…MEVAEAVSAR (242 aa)) enclose the Radical SAM core domain. The 69-residue stretch at 402-470 (QRKVGQTLRV…ADGHDLWGEV (69 aa)) folds into the TRAM domain.

It belongs to the methylthiotransferase family. RimO subfamily. It depends on [4Fe-4S] cluster as a cofactor.

The protein localises to the cytoplasm. The catalysed reaction is L-aspartate(89)-[ribosomal protein uS12]-hydrogen + (sulfur carrier)-SH + AH2 + 2 S-adenosyl-L-methionine = 3-methylsulfanyl-L-aspartate(89)-[ribosomal protein uS12]-hydrogen + (sulfur carrier)-H + 5'-deoxyadenosine + L-methionine + A + S-adenosyl-L-homocysteine + 2 H(+). Catalyzes the methylthiolation of an aspartic acid residue of ribosomal protein uS12. The chain is Ribosomal protein uS12 methylthiotransferase RimO from Cupriavidus taiwanensis (strain DSM 17343 / BCRC 17206 / CCUG 44338 / CIP 107171 / LMG 19424 / R1) (Ralstonia taiwanensis (strain LMG 19424)).